We begin with the raw amino-acid sequence, 459 residues long: Ribulose bisphosphate carboxylase (459 aa).

Asn111 is a binding site for substrate. Lys166 (proton acceptor) is an active-site residue. Lys168 is a substrate binding site. 3 residues coordinate Mg(2+): Lys191, Asp193, and Glu194. Lys191 is subject to N6-carboxylysine. Residue His287 is the Proton acceptor of the active site. Residues Arg288, His321, and Ser368 each coordinate substrate.

Belongs to the RuBisCO large chain family. Type II subfamily. As to quaternary structure, the complex is approximately 350 kDa when isolated from either T.denitrificans or R.sphaeroides, suggesting a homohexamer or homooctamer structure. Requires Mg(2+) as cofactor.

The catalysed reaction is 2 (2R)-3-phosphoglycerate + 2 H(+) = D-ribulose 1,5-bisphosphate + CO2 + H2O. The enzyme catalyses D-ribulose 1,5-bisphosphate + O2 = 2-phosphoglycolate + (2R)-3-phosphoglycerate + 2 H(+). Its function is as follows. RuBisCO catalyzes two reactions: the carboxylation of D-ribulose 1,5-bisphosphate, the primary event in carbon dioxide fixation, as well as the oxidative fragmentation of the pentose substrate. Both reactions occur simultaneously and in competition at the same active site. The sequence is that of Ribulose bisphosphate carboxylase (cbbM) from Thiobacillus denitrificans (strain ATCC 25259 / T1).